The following is a 407-amino-acid chain: Phosphopentomutase (407 aa).

Mn(2+)-binding residues include aspartate 11, aspartate 305, histidine 310, aspartate 346, histidine 347, and histidine 358.

Belongs to the phosphopentomutase family. Mn(2+) is required as a cofactor.

Its subcellular location is the cytoplasm. The catalysed reaction is 2-deoxy-alpha-D-ribose 1-phosphate = 2-deoxy-D-ribose 5-phosphate. It carries out the reaction alpha-D-ribose 1-phosphate = D-ribose 5-phosphate. The protein operates within carbohydrate degradation; 2-deoxy-D-ribose 1-phosphate degradation; D-glyceraldehyde 3-phosphate and acetaldehyde from 2-deoxy-alpha-D-ribose 1-phosphate: step 1/2. Isomerase that catalyzes the conversion of deoxy-ribose 1-phosphate (dRib-1-P) and ribose 1-phosphate (Rib-1-P) to deoxy-ribose 5-phosphate (dRib-5-P) and ribose 5-phosphate (Rib-5-P), respectively. This chain is Phosphopentomutase, found in Legionella pneumophila (strain Paris).